Here is a 289-residue protein sequence, read N- to C-terminus: Phytoene synthase (289 aa).

The protein belongs to the phytoene/squalene synthase family. ATP serves as cofactor. Mn(2+) is required as a cofactor. It depends on Mg(2+) as a cofactor.

It functions in the pathway carotenoid biosynthesis; phytoene biosynthesis. Functionally, involved in the biosynthesis of carotenoids. Catalyzes the condensation of two molecules of geranylgeranyl diphosphate (GGPP) to give prephytoene diphosphate (PPPP) and the subsequent rearrangement of the cyclopropylcarbinyl intermediate to yield phytoene. The chain is Phytoene synthase (crtB) from Thermus thermophilus (strain ATCC BAA-163 / DSM 7039 / HB27).